The primary structure comprises 432 residues: Peptidyl-prolyl cis-trans isomerase cyp6 (432 aa).

The 168-residue stretch at 1–168 (MSVLIETTVG…RDIRIKHTII (168 aa)) folds into the PPIase cyclophilin-type domain. Phosphoserine is present on S206. Positions 244-322 (NVLFVCKLNP…SRIHVDFSQS (79 aa)) constitute an RRM domain. Residues 330–432 (YNSNRDRKRS…DRRYRDDRYR (103 aa)) are disordered. Basic and acidic residues-rich tracts occupy residues 341 to 366 (SRSD…DDYR), 373 to 395 (DHRD…DDRS), and 406 to 432 (NCDD…DRYR).

The protein belongs to the cyclophilin-type PPIase family. PPIL4 subfamily.

It is found in the nucleus. The enzyme catalyses [protein]-peptidylproline (omega=180) = [protein]-peptidylproline (omega=0). In terms of biological role, PPIases accelerate the folding of proteins. It catalyzes the cis-trans isomerization of proline imidic peptide bonds in oligopeptides. This Schizosaccharomyces pombe (strain 972 / ATCC 24843) (Fission yeast) protein is Peptidyl-prolyl cis-trans isomerase cyp6 (cyp6).